A 382-amino-acid polypeptide reads, in one-letter code: Succinyl-diaminopimelate desuccinylase (382 aa).

Position 72 (H72) interacts with Zn(2+). D74 is an active-site residue. Position 105 (D105) interacts with Zn(2+). Residue E139 is the Proton acceptor of the active site. 3 residues coordinate Zn(2+): E140, E168, and H354.

Belongs to the peptidase M20A family. DapE subfamily. As to quaternary structure, homodimer. It depends on Zn(2+) as a cofactor. Co(2+) is required as a cofactor.

The catalysed reaction is N-succinyl-(2S,6S)-2,6-diaminopimelate + H2O = (2S,6S)-2,6-diaminopimelate + succinate. It functions in the pathway amino-acid biosynthesis; L-lysine biosynthesis via DAP pathway; LL-2,6-diaminopimelate from (S)-tetrahydrodipicolinate (succinylase route): step 3/3. Functionally, catalyzes the hydrolysis of N-succinyl-L,L-diaminopimelic acid (SDAP), forming succinate and LL-2,6-diaminopimelate (DAP), an intermediate involved in the bacterial biosynthesis of lysine and meso-diaminopimelic acid, an essential component of bacterial cell walls. The polypeptide is Succinyl-diaminopimelate desuccinylase (Shewanella amazonensis (strain ATCC BAA-1098 / SB2B)).